Consider the following 469-residue polypeptide: ATP synthase subunit beta (469 aa).

155–162 (GGAGCGKT) is a binding site for ATP.

This sequence belongs to the ATPase alpha/beta chains family. F-type ATPases have 2 components, CF(1) - the catalytic core - and CF(0) - the membrane proton channel. CF(1) has five subunits: alpha(3), beta(3), gamma(1), delta(1), epsilon(1). CF(0) has three main subunits: a(1), b(2) and c(9-12). The alpha and beta chains form an alternating ring which encloses part of the gamma chain. CF(1) is attached to CF(0) by a central stalk formed by the gamma and epsilon chains, while a peripheral stalk is formed by the delta and b chains.

The protein localises to the cell inner membrane. It carries out the reaction ATP + H2O + 4 H(+)(in) = ADP + phosphate + 5 H(+)(out). Its function is as follows. Produces ATP from ADP in the presence of a proton gradient across the membrane. The catalytic sites are hosted primarily by the beta subunits. The protein is ATP synthase subunit beta of Syntrophus aciditrophicus (strain SB).